The following is a 347-amino-acid chain: MGDELAPCPVGTTAWPALIQLISKTPCMPQAASNTSLGLGDLRVPSSMLYWLFLPSSLLAAATLAVSPLLLVTILRNQRLRQEPHYLLPANILLSDLAYILLHMLISSSSLGGWELGRMACGILTDAVFAACTSTILSFTAIVLHTYLAVIHPLRYLSFMSHGAAWKAVALIWLVACCFPTFLIWLSKWQDAQLEEQGASYILPPSMGTQPGCGLLVIVTYTSILCVLFLCTALIANCFWRIYAEAKTSGIWGQGYSRARGTLLIHSVLITLYVSTGVVFSLDMVLTRYHHIDSGTHTWLLAANSEVLMMLPRAMLTYLYLLRYRQLLGMVRGHLPSRRHQAIFTIS.

At 1 to 51 (MGDELAPCPVGTTAWPALIQLISKTPCMPQAASNTSLGLGDLRVPSSMLYW) the chain is on the extracellular side. Residue Asn-34 is glycosylated (N-linked (GlcNAc...) asparagine). A helical membrane pass occupies residues 52-72 (LFLPSSLLAAATLAVSPLLLV). The Cytoplasmic segment spans residues 73 to 85 (TILRNQRLRQEPH). A helical membrane pass occupies residues 86-106 (YLLPANILLSDLAYILLHMLI). Residues 107-130 (SSSSLGGWELGRMACGILTDAVFA) are Extracellular-facing. Residues 131–151 (ACTSTILSFTAIVLHTYLAVI) traverse the membrane as a helical segment. The Cytoplasmic segment spans residues 152 to 165 (HPLRYLSFMSHGAA). Residues 166–186 (WKAVALIWLVACCFPTFLIWL) traverse the membrane as a helical segment. Residues 187–214 (SKWQDAQLEEQGASYILPPSMGTQPGCG) lie on the Extracellular side of the membrane. Residues 215–235 (LLVIVTYTSILCVLFLCTALI) traverse the membrane as a helical segment. The Cytoplasmic portion of the chain corresponds to 236–261 (ANCFWRIYAEAKTSGIWGQGYSRARG). Residues 262 to 282 (TLLIHSVLITLYVSTGVVFSL) form a helical membrane-spanning segment. The Extracellular segment spans residues 283–299 (DMVLTRYHHIDSGTHTW). The helical transmembrane segment at 300–322 (LLAANSEVLMMLPRAMLTYLYLL) threads the bilayer. Topologically, residues 323 to 347 (RYRQLLGMVRGHLPSRRHQAIFTIS) are cytoplasmic.

The protein belongs to the G-protein coupled receptor 1 family. As to expression, expression restricted to nervous system and testis. Is also detected in several tumors types, most notably prostate cancer.

It is found in the cell membrane. Functionally, orphan receptor. The sequence is that of Probable G-protein coupled receptor 148 (GPR148) from Homo sapiens (Human).